The primary structure comprises 374 residues: SKP1-interacting partner 15 (374 aa).

One can recognise an F-box domain in the interval 3–48 (SSPVNCLPPDSLHQIFSSLPIRDIMICRSVCKFFNQLLTSQCFIEI).

Part of a SCF (ASK-cullin-F-box) protein ligase complex. Interacts with SKP1A/ASK1, SKP1B/ASK2, ASK11 and ASK13.

The protein resides in the nucleus. It functions in the pathway protein modification; protein ubiquitination. Component of SCF(ASK-cullin-F-box) E3 ubiquitin ligase complexes, which may mediate the ubiquitination and subsequent proteasomal degradation of target proteins. The polypeptide is SKP1-interacting partner 15 (SKIP15) (Arabidopsis thaliana (Mouse-ear cress)).